The primary structure comprises 814 residues: DNA gyrase subunit A (814 aa).

The Topo IIA-type catalytic domain maps to 32–499 (LPDVRDGLKP…GVIEFREEDL (468 aa)). Tyr120 acts as the O-(5'-phospho-DNA)-tyrosine intermediate in catalysis. A GyrA-box motif is present at residues 526 to 532 (QHRAGRG).

Belongs to the type II topoisomerase GyrA/ParC subunit family. As to quaternary structure, heterotetramer, composed of two GyrA and two GyrB chains. In the heterotetramer, GyrA contains the active site tyrosine that forms a transient covalent intermediate with DNA, while GyrB binds cofactors and catalyzes ATP hydrolysis.

The protein resides in the cytoplasm. It carries out the reaction ATP-dependent breakage, passage and rejoining of double-stranded DNA.. Functionally, a type II topoisomerase that negatively supercoils closed circular double-stranded (ds) DNA in an ATP-dependent manner to modulate DNA topology and maintain chromosomes in an underwound state. Negative supercoiling favors strand separation, and DNA replication, transcription, recombination and repair, all of which involve strand separation. Also able to catalyze the interconversion of other topological isomers of dsDNA rings, including catenanes and knotted rings. Type II topoisomerases break and join 2 DNA strands simultaneously in an ATP-dependent manner. The sequence is that of DNA gyrase subunit A from Dehalogenimonas lykanthroporepellens (strain ATCC BAA-1523 / JCM 15061 / BL-DC-9).